The chain runs to 1349 residues: Serine/threonine-protein kinase GIN4 (1349 aa).

Residues 1–20 (MPHSRQPSISSSIMSQSNHN) show a composition bias toward low complexity. Residues 1-30 (MPHSRQPSISSSIMSQSNHNHPQKIGPWKL) are disordered. A phosphoserine mark is found at Ser10, Ser11, Ser12, and Ser15. Residues 28–288 (WKLGKTLGRG…TEKILRHPLL (261 aa)) form the Protein kinase domain. ATP is bound by residues 34 to 42 (LGRGATGRV) and Lys57. The residue at position 69 (Thr69) is a Phosphothreonine. Asp158 serves as the catalytic Proton acceptor. Phosphothreonine is present on Thr191. Residues Ser294, Ser300, and Ser303 each carry the phosphoserine modification. 2 disordered regions span residues 366 to 498 (QEDN…KAKP) and 510 to 532 (SNFSLPPSLPPSLPSKDSRYMID). The span at 369-384 (NTNNNSPKKSTSFNNK) shows a compositional bias: low complexity. Residues Ser388, Ser390, and Ser393 each carry the phosphoserine modification. Thr397 carries the post-translational modification Phosphothreonine. Composition is skewed to polar residues over residues 406 to 418 (ISVSRPTSFQYKS) and 426 to 442 (ANRNSVARHSVASSANN). A phosphoserine mark is found at Ser407 and Ser409. Thr412 is modified (phosphothreonine). At Ser413 the chain carries Phosphoserine. A compositionally biased stretch (low complexity) spans 443–470 (SPRKSPYKSPYRSPYRSPYKSPSKRYSY). Ser455, Ser469, Ser473, Ser477, and Ser485 each carry phosphoserine. Residues 471 to 488 (NQSPTKSPYGRRSNSQRQ) show a composition bias toward polar residues. Ser556 bears the Phosphoserine mark. The segment covering 570–585 (RNSIIGKNNNNSNSNK) has biased composition (low complexity). Residues 570-593 (RNSIIGKNNNNSNSNKRMSKRKSI) form a disordered region. The residue at position 634 (Ser634) is a Phosphoserine. The stretch at 661 to 701 (EEKEAKEYERLMELERKKHEAELKARRELEKKKRRQKRRSI) forms a coiled coil. Residues 712–737 (KNDADPNNSEQELVDEGIKQPKRQSK) form a disordered region. Phosphoserine is present on residues Ser720 and Ser746. The interval 756 to 798 (TLEDVENLKRRSASQPVPKRRQTPVLTRRPVSRLDPLWQAHEN) is disordered. Residues Thr778, Thr869, and Thr876 each carry the phosphothreonine modification. Residue Ser891 is modified to Phosphoserine. Thr941 carries the post-translational modification Phosphothreonine. Position 973 is a phosphoserine (Ser973). Phosphothreonine occurs at positions 990 and 992. Ser999 is subject to Phosphoserine. Positions 1011-1229 (RTSYYDGSGK…AESKEEKPKS (219 aa)) are disordered. The span at 1024–1040 (RASTTKRYNVHSSSGQR) shows a compositional bias: polar residues. Basic and acidic residues predominate over residues 1044-1053 (KVPDLPKNDY). Thr1056 carries the phosphothreonine modification. Phosphoserine is present on residues Ser1059, Ser1074, Ser1077, Ser1078, Ser1080, and Ser1094. Over residues 1083–1094 (VFDKIKLPDGKS) the composition is skewed to basic and acidic residues. Thr1095 is subject to Phosphothreonine. Ser1097 and Ser1098 each carry phosphoserine. A Phosphothreonine modification is found at Thr1106. Residues 1134 to 1149 (IESSQPMSKVRGNNSS) show a composition bias toward polar residues. Ser1154 is subject to Phosphoserine. Over residues 1202 to 1215 (NNTNAATNTTTQQQ) the composition is skewed to low complexity. Ser1218 bears the Phosphoserine mark.

It belongs to the protein kinase superfamily. CAMK Ser/Thr protein kinase family. NIM1 subfamily. As to quaternary structure, associates with the septin complex which consists of CDC3, CDC10, CDC11, CDC12, and SEP7. Post-translationally, hyperphosphorylated during mitosis at dozens of sites. Among these, 7 have perfect or minimal CDK consensus sites and are CDC28 targets.

Its subcellular location is the cytoplasm. The protein resides in the bud neck. It carries out the reaction L-seryl-[protein] + ATP = O-phospho-L-seryl-[protein] + ADP + H(+). The catalysed reaction is L-threonyl-[protein] + ATP = O-phospho-L-threonyl-[protein] + ADP + H(+). Its function is as follows. Serine/threonine-protein kinase which regulates the localization and the function of the septins during mitosis. Involved in the formation of the septin ring but not the basal septin band. Phosphorylates septins CDC11 and SEP7. Required for the transition from pseudohyphae to hyphae. Acts upstream of IRS4 and INP51 in regulating cell wall integrity responses. Involved in propolis-induced cell death. The sequence is that of Serine/threonine-protein kinase GIN4 (GIN4) from Candida albicans (strain SC5314 / ATCC MYA-2876) (Yeast).